The primary structure comprises 228 residues: 7-cyano-7-deazaguanine synthase (228 aa).

9–19 (YSGGLDSTTCM) is an ATP binding site. Residues Cys189, Cys199, Cys202, and Cys205 each coordinate Zn(2+).

It belongs to the QueC family. Requires Zn(2+) as cofactor.

It catalyses the reaction 7-carboxy-7-deazaguanine + NH4(+) + ATP = 7-cyano-7-deazaguanine + ADP + phosphate + H2O + H(+). Its pathway is purine metabolism; 7-cyano-7-deazaguanine biosynthesis. Functionally, catalyzes the ATP-dependent conversion of 7-carboxy-7-deazaguanine (CDG) to 7-cyano-7-deazaguanine (preQ(0)). This Geotalea uraniireducens (strain Rf4) (Geobacter uraniireducens) protein is 7-cyano-7-deazaguanine synthase.